The sequence spans 118 residues: Probable small nuclear ribonucleoprotein Sm D2 (118 aa).

In terms of domain architecture, Sm spans 29–115 (LSILTNSVKN…VILVVKNPLA (87 aa)).

The protein belongs to the snRNP core protein family.

The protein localises to the nucleus. The protein resides in the cytoplasm. It is found in the cytosol. Plays a role in pre-mRNA splicing as a core component of the spliceosomal U1, U2, U4 and U5 small nuclear ribonucleoproteins (snRNPs), the building blocks of the spliceosome. In Caenorhabditis elegans, this protein is Probable small nuclear ribonucleoprotein Sm D2 (snr-4).